A 238-amino-acid polypeptide reads, in one-letter code: Probable transcriptional regulatory protein SSU98_0387 (238 aa).

Belongs to the TACO1 family. YeeN subfamily.

The protein localises to the cytoplasm. The protein is Probable transcriptional regulatory protein SSU98_0387 of Streptococcus suis (strain 98HAH33).